A 1040-amino-acid chain; its full sequence is MLEDISEEDIWEYKSKRKPKRVDPNNGSKNILKSVEKATDGKYQSKRSRNRKRAAEAKEVKDHEVPLGNAGCQTSVASSQNSSCGDGIQQTQDKETTPGKLCRTQKSQHVSPKIRPVYDGYCPNCQMPFSSLIGQTPRWHVFECLDSPPRSETECPDGLLCTSTIPFHYKRYTHFLLAQSRAGDHPFSSPSPASGGSFSETKSGVLCSLEERWSSYQNQTDNSVSNDPLLMTQYFKKSPSLTEASEKISTHIQTSQQALQFTDFVENDKLVGVALRLANNSEHINLPLPENDFSDCEISYSPLQSDEDTHDIDEKPDDSQEQLFFTESSKDGSLEEDDDSCGFFKKRHGPLLKDQDESCPKVNSFLTRDKYDEGLYRFNSLNDLSQPISQNNESTLPYDLACTGGDFVLFPPALAGKLAASVHQATKAKPDEPEFHSAQSNKQKQVIEESSVYNQVSLPLVKSLMLKPFESQVEGYLSSQPTQNTIRKLSSENLNAKNNTNSACFCRKALEGVPVGKATILNTENLSSTPAPKYLKILPSGLKYNARHPSTKVMKQMDIGVYFGLPPKRKEEKLLGESALEGINLNPVPSPNQKRSSQCKRKAEKSLSDLEFDASTLHESQLSVELSSERSQRQKKRCRKSNSLQEGACQKRSDHLINTESEAVNLSKVKVFTKSAHGGLQRGNKKIPESSNVGGSRKKTCPFYKKIPGTGFTVDAFQYGVVEGCTAYFLTHFHSDHYAGLSKHFTFPVYCSEITGNLLKNKLHVQEQYIHPLPLDTECIVNGVKVVLLDANHCPGAVMILFYLPNGTVILHTGDFRADPSMERSLLADQKVHMLYLDTTYCSPEYTFPSQQEVIRFAINTAFEAVTLNPHALVVCGTYSIGKEKVFLAIADVLGSKVGMSQEKYKTLQCLNIPEINSLITTDMCSSLVHLLPMMQINFKGLQSHLKKCGGKYNQILAFRPTGWTHSNKFTRIADVIPQTKGNISIYGIPYSEHSSYLEMKRFVQWLKPQKIIPTVNVGTWKSRSTMEKYFREWKLEAGY.

The tract at residues 1–190 is nuclear localization region; it reads MLEDISEEDI…RAGDHPFSSP (190 aa). Positions 15 to 76 are disordered; that stretch reads SKRKPKRVDP…LGNAGCQTSV (62 aa). Residues 53–65 show a composition bias toward basic and acidic residues; the sequence is RAAEAKEVKDHEV. The UBZ4-type zinc finger occupies 119–149; it reads DGYCPNCQMPFSSLIGQTPRWHVFECLDSPP. Cys122, Cys125, His140, and Cys144 together coordinate Zn(2+). Residues Lys202, Lys236, Lys269, Lys353, Lys361, Lys429, Lys488, Lys508, Lys517, Lys533, and Lys536 each participate in a glycyl lysine isopeptide (Lys-Gly) (interchain with G-Cter in SUMO2) cross-link. Residues 396 to 614 form a nuclear focus formation region; that stretch reads LPYDLACTGG…KSLSDLEFDA (219 aa). Disordered stretches follow at residues 582 to 602 and 623 to 651; these read GINLNPVPSPNQKRSSQCKRK and SVELSSERSQRQKKRCRKSNSLQEGACQK. Residue Ser590 is modified to Phosphoserine. Residues Lys668, Lys670, and Lys674 each participate in a glycyl lysine isopeptide (Lys-Gly) (interchain with G-Cter in SUMO2) cross-link.

It belongs to the DNA repair metallo-beta-lactamase (DRMBL) family. In terms of assembly, binds constitutively to TP53BP1. Binds CDC27, which is itself a component of the anaphase promoting complex (APC). Binds PIAS1. As to expression, expressed in brain, heart, kidney, liver, pancreas, placenta and skeletal muscle.

The protein localises to the nucleus. It catalyses the reaction a beta-lactam + H2O = a substituted beta-amino acid. Beta-lactamase activity is inhibited by sulbactam. May be required for DNA interstrand cross-link repair. Also required for checkpoint mediated cell cycle arrest in early prophase in response to mitotic spindle poisons. Possesses beta-lactamase activity, catalyzing the hydrolysis of penicillin G and nitrocefin. Exhibits no activity towards other beta-lactam antibiotic classes including cephalosporins (cefotaxime) and carbapenems (imipenem). This is DNA cross-link repair 1A protein (DCLRE1A) from Homo sapiens (Human).